The chain runs to 149 residues: Deoxyuridine 5'-triphosphate nucleotidohydrolase (149 aa).

Substrate contacts are provided by residues 68–70 (RSG), asparagine 81, 85–87 (TID), and lysine 95.

Belongs to the dUTPase family. Mg(2+) serves as cofactor.

It carries out the reaction dUTP + H2O = dUMP + diphosphate + H(+). The protein operates within pyrimidine metabolism; dUMP biosynthesis; dUMP from dCTP (dUTP route): step 2/2. Functionally, this enzyme is involved in nucleotide metabolism: it produces dUMP, the immediate precursor of thymidine nucleotides and it decreases the intracellular concentration of dUTP so that uracil cannot be incorporated into DNA. In Bdellovibrio bacteriovorus (strain ATCC 15356 / DSM 50701 / NCIMB 9529 / HD100), this protein is Deoxyuridine 5'-triphosphate nucleotidohydrolase.